We begin with the raw amino-acid sequence, 472 residues long: Aspartyl/glutamyl-tRNA(Asn/Gln) amidotransferase subunit B (472 aa).

The protein belongs to the GatB/GatE family. GatB subfamily. In terms of assembly, heterotrimer of A, B and C subunits.

The catalysed reaction is L-glutamyl-tRNA(Gln) + L-glutamine + ATP + H2O = L-glutaminyl-tRNA(Gln) + L-glutamate + ADP + phosphate + H(+). It catalyses the reaction L-aspartyl-tRNA(Asn) + L-glutamine + ATP + H2O = L-asparaginyl-tRNA(Asn) + L-glutamate + ADP + phosphate + 2 H(+). Its function is as follows. Allows the formation of correctly charged Asn-tRNA(Asn) or Gln-tRNA(Gln) through the transamidation of misacylated Asp-tRNA(Asn) or Glu-tRNA(Gln) in organisms which lack either or both of asparaginyl-tRNA or glutaminyl-tRNA synthetases. The reaction takes place in the presence of glutamine and ATP through an activated phospho-Asp-tRNA(Asn) or phospho-Glu-tRNA(Gln). This chain is Aspartyl/glutamyl-tRNA(Asn/Gln) amidotransferase subunit B, found in Campylobacter jejuni subsp. jejuni serotype O:6 (strain 81116 / NCTC 11828).